Consider the following 293-residue polypeptide: Energy-coupling factor transporter ATP-binding protein EcfA2 (293 aa).

The region spanning 3–246 (ITFQKVEHRY…ADELEKIGVD (244 aa)) is the ABC transporter domain. Residue 40–47 (GHTGSGKS) participates in ATP binding.

It belongs to the ABC transporter superfamily. Energy-coupling factor EcfA family. Forms a stable energy-coupling factor (ECF) transporter complex composed of 2 membrane-embedded substrate-binding proteins (S component), 2 ATP-binding proteins (A component) and 2 transmembrane proteins (T component).

Its subcellular location is the cell membrane. Functionally, ATP-binding (A) component of a common energy-coupling factor (ECF) ABC-transporter complex. Unlike classic ABC transporters this ECF transporter provides the energy necessary to transport a number of different substrates. The sequence is that of Energy-coupling factor transporter ATP-binding protein EcfA2 from Bacillus cereus (strain ATCC 10987 / NRS 248).